Reading from the N-terminus, the 82-residue chain is Sec-independent protein translocase protein TatA (82 aa).

A helical transmembrane segment spans residues 1–21 (MGIFDWKHWIVILIVVVLVFG). The interval 43–82 (VNTEEDDKKDQPAAQPAQPLNQPHTIDAQAQKVEEPARKD) is disordered.

This sequence belongs to the TatA/E family. As to quaternary structure, the Tat system comprises two distinct complexes: a TatABC complex, containing multiple copies of TatA, TatB and TatC subunits, and a separate TatA complex, containing only TatA subunits. Substrates initially bind to the TatABC complex, which probably triggers association of the separate TatA complex to form the active translocon.

The protein resides in the cell inner membrane. Part of the twin-arginine translocation (Tat) system that transports large folded proteins containing a characteristic twin-arginine motif in their signal peptide across membranes. TatA could form the protein-conducting channel of the Tat system. The polypeptide is Sec-independent protein translocase protein TatA (Pseudomonas aeruginosa (strain LESB58)).